Consider the following 629-residue polypeptide: tRNA uridine 5-carboxymethylaminomethyl modification enzyme MnmG (629 aa).

FAD is bound by residues 13-18 (GGGHAG), Val125, and Ser180. 273–287 (GPRYCPSIEDKVMRF) provides a ligand contact to NAD(+). Gln370 contributes to the FAD binding site.

It belongs to the MnmG family. As to quaternary structure, homodimer. Heterotetramer of two MnmE and two MnmG subunits. The cofactor is FAD.

The protein resides in the cytoplasm. In terms of biological role, NAD-binding protein involved in the addition of a carboxymethylaminomethyl (cmnm) group at the wobble position (U34) of certain tRNAs, forming tRNA-cmnm(5)s(2)U34. The polypeptide is tRNA uridine 5-carboxymethylaminomethyl modification enzyme MnmG (Salmonella schwarzengrund (strain CVM19633)).